The primary structure comprises 400 residues: 1-deoxy-D-xylulose 5-phosphate reductoisomerase (400 aa).

The NADPH site is built by threonine 17, glycine 18, serine 19, isoleucine 20, and asparagine 131. Lysine 132 is a 1-deoxy-D-xylulose 5-phosphate binding site. Glutamate 133 contacts NADPH. Position 157 (aspartate 157) interacts with Mn(2+). 1-deoxy-D-xylulose 5-phosphate is bound by residues serine 158, glutamate 159, serine 188, and histidine 211. Residue glutamate 159 participates in Mn(2+) binding. NADPH is bound at residue glycine 217. 1-deoxy-D-xylulose 5-phosphate-binding residues include serine 224, asparagine 229, lysine 230, and glutamate 233. Glutamate 233 is a Mn(2+) binding site.

Belongs to the DXR family. Mg(2+) is required as a cofactor. Mn(2+) serves as cofactor.

The catalysed reaction is 2-C-methyl-D-erythritol 4-phosphate + NADP(+) = 1-deoxy-D-xylulose 5-phosphate + NADPH + H(+). It participates in isoprenoid biosynthesis; isopentenyl diphosphate biosynthesis via DXP pathway; isopentenyl diphosphate from 1-deoxy-D-xylulose 5-phosphate: step 1/6. Functionally, catalyzes the NADPH-dependent rearrangement and reduction of 1-deoxy-D-xylulose-5-phosphate (DXP) to 2-C-methyl-D-erythritol 4-phosphate (MEP). The chain is 1-deoxy-D-xylulose 5-phosphate reductoisomerase from Pseudomonas putida (strain ATCC 47054 / DSM 6125 / CFBP 8728 / NCIMB 11950 / KT2440).